A 327-amino-acid polypeptide reads, in one-letter code: Malate dehydrogenase (327 aa).

NAD(+) is bound at residue 11-17 (GAAGQIA). 2 residues coordinate substrate: Arg92 and Arg98. NAD(+) is bound by residues Asn105, Gln112, and 129–131 (VGN). Asn131 and Arg162 together coordinate substrate. The active-site Proton acceptor is His187.

Belongs to the LDH/MDH superfamily. MDH type 2 family.

It catalyses the reaction (S)-malate + NAD(+) = oxaloacetate + NADH + H(+). Its function is as follows. Catalyzes the reversible oxidation of malate to oxaloacetate. This Nitrosospira multiformis (strain ATCC 25196 / NCIMB 11849 / C 71) protein is Malate dehydrogenase.